We begin with the raw amino-acid sequence, 396 residues long: Elongation factor Tu (396 aa).

The tr-type G domain occupies 10 to 206 (KPHVNVGTIG…ALDDYIPEPE (197 aa)). Positions 19–26 (GHVDHGKT) are G1. GTP is bound at residue 19-26 (GHVDHGKT). Thr26 is a Mg(2+) binding site. Positions 60–64 (GITIA) are G2. The tract at residues 81–84 (DCPG) is G3. GTP contacts are provided by residues 81 to 85 (DCPGH) and 136 to 139 (NKAD). Positions 136–139 (NKAD) are G4. The interval 174–176 (SAL) is G5.

It belongs to the TRAFAC class translation factor GTPase superfamily. Classic translation factor GTPase family. EF-Tu/EF-1A subfamily. In terms of assembly, monomer.

It localises to the cytoplasm. The enzyme catalyses GTP + H2O = GDP + phosphate + H(+). In terms of biological role, GTP hydrolase that promotes the GTP-dependent binding of aminoacyl-tRNA to the A-site of ribosomes during protein biosynthesis. This is Elongation factor Tu from Methylococcus capsulatus (strain ATCC 33009 / NCIMB 11132 / Bath).